We begin with the raw amino-acid sequence, 120 residues long: MITKTSKNAARLKRHARVRAKLSGTAERPRLNVFRSNKHIYAQIIDDVNGVTLASASTLDKDLNVESTGDTSAATKVGELVAKRAAEKGISDVVFDRGGYLYHGRVKALADAAREAGLKF.

This sequence belongs to the universal ribosomal protein uL18 family. Part of the 50S ribosomal subunit. Part of the 5S rRNA/L5/L18/L25 subcomplex. Contacts the 23S rRNA and 5S rRNA. Required for catalysis of RNase M5.

In terms of biological role, this is one of the proteins that bind and probably mediate the attachment of the 5S RNA into the large ribosomal subunit, where it forms part of the central protuberance. Its function is as follows. Required for correct processing of both the 5' and 3' ends of 5S rRNA precursor, which is does in conjunction with ribonuclease M5 (RNase M5, rnmV). Possibly folds the 5S rRNA precursor into the correct conformation, thus acting as a chaperone. The protein is Large ribosomal subunit protein uL18 of Bacillus subtilis (strain 168).